Consider the following 200-residue polypeptide: Late embryogenesis abundant protein 19 (200 aa).

Disordered regions lie at residues 1–158 (MASH…KSTV) and 172–200 (TEDK…ARDH). 5 stretches are compositionally biased toward basic and acidic residues: residues 13 to 23 (GETKAHTEEKA), 30 to 42 (SKDK…DRAS), 53 to 81 (QDTK…KDKT), 88 to 97 (ARDKAAESKD), and 105 to 114 (EKTEQAKQKA). A coiled-coil region spans residues 52 to 81 (GQDTKEATKEKAQAAKERASETAQAAKDKT). A compositionally biased stretch (low complexity) spans 115 to 130 (AETAGAAKQKTAETAQ). Over residues 145–156 (SVLQQASEQVKS) the composition is skewed to polar residues. Residues 172–183 (TEDKAGTDDGAN) show a composition bias toward basic and acidic residues. The segment covering 186 to 200 (TSATAAATETTARDH) has biased composition (low complexity).

The protein belongs to the LEA type 4 family. In terms of tissue distribution, expressed in the shoot apex and leaves.

Functionally, involved in response to drought stress. In Oryza sativa subsp. indica (Rice), this protein is Late embryogenesis abundant protein 19.